The sequence spans 304 residues: N-acetylmuramic acid 6-phosphate etherase (304 aa).

Residues A57–K220 form the SIS domain. E85 functions as the Proton donor in the catalytic mechanism. E116 is a catalytic residue.

The protein belongs to the GCKR-like family. MurNAc-6-P etherase subfamily. As to quaternary structure, homodimer.

The catalysed reaction is N-acetyl-D-muramate 6-phosphate + H2O = N-acetyl-D-glucosamine 6-phosphate + (R)-lactate. Its pathway is amino-sugar metabolism; N-acetylmuramate degradation. Its function is as follows. Specifically catalyzes the cleavage of the D-lactyl ether substituent of MurNAc 6-phosphate, producing GlcNAc 6-phosphate and D-lactate. The chain is N-acetylmuramic acid 6-phosphate etherase from Cutibacterium acnes (strain DSM 16379 / KPA171202) (Propionibacterium acnes).